A 253-amino-acid chain; its full sequence is MILSAFSLEGKVAVVTGCDTGLGQGMALGLAQAGCDIVGINIVEPTETIEQVTALGRRFLSLTADLRKIDGIPALLDRAVAEFGHIDILVNNAGLIRREDALEFSEKDWDDVMNLNIKSVFFMSQAAAKHFIAQGNGGKIINIASMLSFQGGIRVPSYTASKSGVMGVTRLMANEWAKHNINVNAIAPGYMATNNTQQLRADEQRSAEILDRIPAGRWGLPSDLMGPIVFLASSASDYVNGYTIAVDGGWLAR.

14 to 38 (VVTGCDTGLGQGMALGLAQAGCDIV) is an NAD(+) binding site. Serine 145 contributes to the substrate binding site. Catalysis depends on tyrosine 158, which acts as the Proton acceptor.

This sequence belongs to the short-chain dehydrogenases/reductases (SDR) family. As to quaternary structure, homotetramer.

The enzyme catalyses 2-dehydro-3-deoxy-D-gluconate + NAD(+) = 3-deoxy-D-glycero-2,5-hexodiulosonate + NADH + H(+). It catalyses the reaction 4-pregnen-20,21-diol-3-one + NAD(+) = 21-hydroxyprogesterone + NADH + H(+). Functionally, catalyzes the reversible reduction of 2,5-diketo-3-deoxygluconate (DKII or 4,6-dihydroxy-2,5-dioxohexanoate) into 2-keto-3-deoxygluconate (KDG or 2-dehydro-3-deoxygluconate) with a concomitant oxidation of NADH. To a lesser extent, can also reduce 5-keto-D-gluconate and oxidize D-gluconate and 1,2-propanediol. Together with KduI, seems to play a role in the catabolism of hexuronates under osmotic stress conditions, substituting for the regular hexuronate degrading enzymes UxaABC and UxuAB whose expression is repressed in these conditions. In vitro, also exhibits NADH-dependent 20-ketosteroid reductase activity against eukaryotic steroid hormone 11-deoxycorticosterone (11-DOC), which is converted into the product 4-pregnen-20,21-diol-3-one. In addition to 11-DOC, five other C21 steroid compounds (11-deoxycortisol, cortisol, corticosterone, cortisone, and 21-hydroxypregnenolone) are reduced by KduD, but steroids lacking the hydroxyl group at C21 position, such as pregnenolone, testosterone propionate, cortisone acetate, or progesterone, cannot be used as substrate. This is 2-dehydro-3-deoxy-D-gluconate 5-dehydrogenase from Escherichia coli (strain K12).